Consider the following 39-residue polypeptide: Cecropin-D-like peptide (39 aa).

As to expression, hemolymph.

The protein localises to the secreted. Cecropins have lytic and antibacterial activity against several Gram-positive and Gram-negative bacteria. Has antibacterial activity against the Gram-positive bacteria M.luteus (MIC=34.4 uM), L.monocytogenes (MIC=34.4 uM), and S.lutea (MIC=34.4 uM), and the Gram-negative bacterium E.coli D31 (MIC=8.6 uM). Lacks antibacterial activity against the Gram-positive bacterium B.circulans, and the Gram-negative bacteria E.coli ATCC 25922 and S.typhimurium. Has antifungal activity against A.niger, but lacks antifungal activity against C.albicans, C.wickerhamii, F.oxysporum, P.pastoris, P.tannophilus, S.cerevisiae, T.harzianum, and Z.marxianus. In Galleria mellonella (Greater wax moth), this protein is Cecropin-D-like peptide.